A 252-amino-acid chain; its full sequence is Pyridoxine 5'-phosphate synthase (252 aa).

Position 7 (N7) interacts with 3-amino-2-oxopropyl phosphate. 9 to 10 (DH) lines the 1-deoxy-D-xylulose 5-phosphate pocket. 3-amino-2-oxopropyl phosphate is bound at residue R18. The active-site Proton acceptor is H43. Positions 45 and 50 each coordinate 1-deoxy-D-xylulose 5-phosphate. E70 acts as the Proton acceptor in catalysis. T100 provides a ligand contact to 1-deoxy-D-xylulose 5-phosphate. The Proton donor role is filled by H190. 3-amino-2-oxopropyl phosphate-binding positions include G191 and 212-213 (GH).

It belongs to the PNP synthase family. In terms of assembly, homooctamer; tetramer of dimers.

It localises to the cytoplasm. It catalyses the reaction 3-amino-2-oxopropyl phosphate + 1-deoxy-D-xylulose 5-phosphate = pyridoxine 5'-phosphate + phosphate + 2 H2O + H(+). It functions in the pathway cofactor biosynthesis; pyridoxine 5'-phosphate biosynthesis; pyridoxine 5'-phosphate from D-erythrose 4-phosphate: step 5/5. Catalyzes the complicated ring closure reaction between the two acyclic compounds 1-deoxy-D-xylulose-5-phosphate (DXP) and 3-amino-2-oxopropyl phosphate (1-amino-acetone-3-phosphate or AAP) to form pyridoxine 5'-phosphate (PNP) and inorganic phosphate. This is Pyridoxine 5'-phosphate synthase from Synechococcus sp. (strain RCC307).